The sequence spans 471 residues: Ribulose bisphosphate carboxylase large chain 2 (471 aa).

Substrate is bound by residues asparagine 116 and threonine 166. The active-site Proton acceptor is lysine 168. Lysine 170 contacts substrate. 3 residues coordinate Mg(2+): lysine 194, aspartate 196, and glutamate 197. An N6-carboxylysine modification is found at lysine 194. The Proton acceptor role is filled by histidine 287. Positions 288, 320, and 372 each coordinate substrate.

The protein belongs to the RuBisCO large chain family. Type I subfamily. Heterohexadecamer of 8 large chains and 8 small chains. Forms a CsoS2-CsoS1-RuBisCO complex. It depends on Mg(2+) as a cofactor.

The protein resides in the carboxysome. It carries out the reaction 2 (2R)-3-phosphoglycerate + 2 H(+) = D-ribulose 1,5-bisphosphate + CO2 + H2O. It catalyses the reaction D-ribulose 1,5-bisphosphate + O2 = 2-phosphoglycolate + (2R)-3-phosphoglycerate + 2 H(+). Functionally, ruBisCO catalyzes two reactions: the carboxylation of D-ribulose 1,5-bisphosphate, the primary event in carbon dioxide fixation, as well as the oxidative fragmentation of the pentose substrate. Both reactions occur simultaneously and in competition at the same active site. Replacing the endogenous type I ccbLS genes in H.neapolitanus with this carboxysomally targeted enzyme reconstitutes RuBisCO with about 25% of normal activity; the active enzyme is targeted to carboxysomes. The sequence is that of Ribulose bisphosphate carboxylase large chain 2 from Hydrogenovibrio crunogenus (strain DSM 25203 / XCL-2) (Thiomicrospira crunogena).